The following is a 220-amino-acid chain: Adenylate kinase (220 aa).

10-15 contributes to the ATP binding site; that stretch reads GSGKST. The tract at residues 30–59 is NMP; sequence SSGDIIRAEISSRTPLGLEMEKYLSRGDLI. Residues Ser31, Arg36, 57 to 59, 83 to 86, and Gln90 contribute to the AMP site; these read DLI and GYPR. Positions 124-161 are LID; the sequence is GRRICSKCGAVYHIEFNPPKIPGKCDICGGDLIQRPDD. Residue Arg125 coordinates ATP. Cys128 and Cys131 together coordinate Zn(2+). 134-135 serves as a coordination point for ATP; sequence VY. 2 residues coordinate Zn(2+): Cys148 and Cys151. Positions 158 and 169 each coordinate AMP. Gly197 lines the ATP pocket.

The protein belongs to the adenylate kinase family. Monomer.

The protein localises to the cytoplasm. It carries out the reaction AMP + ATP = 2 ADP. It functions in the pathway purine metabolism; AMP biosynthesis via salvage pathway; AMP from ADP: step 1/1. Functionally, catalyzes the reversible transfer of the terminal phosphate group between ATP and AMP. Plays an important role in cellular energy homeostasis and in adenine nucleotide metabolism. The chain is Adenylate kinase from Pyrococcus horikoshii (strain ATCC 700860 / DSM 12428 / JCM 9974 / NBRC 100139 / OT-3).